The following is a 109-amino-acid chain: Ribonuclease P protein component (109 aa).

Belongs to the RnpA family. Consists of a catalytic RNA component (M1 or rnpB) and a protein subunit.

It carries out the reaction Endonucleolytic cleavage of RNA, removing 5'-extranucleotides from tRNA precursor.. Its function is as follows. RNaseP catalyzes the removal of the 5'-leader sequence from pre-tRNA to produce the mature 5'-terminus. It can also cleave other RNA substrates such as 4.5S RNA. The protein component plays an auxiliary but essential role in vivo by binding to the 5'-leader sequence and broadening the substrate specificity of the ribozyme. The protein is Ribonuclease P protein component of Mycoplasma capricolum subsp. capricolum (strain California kid / ATCC 27343 / NCTC 10154).